The primary structure comprises 216 residues: Probable GH family 25 lysozyme 5 (216 aa).

Positions 1–20 (MRFIISLLFVFTLIFNLAFS) are cleaved as a signal peptide. In terms of domain architecture, Ch-type lysozyme spans 21-216 (HIGIDVSSGT…GLGIDKNYWE (196 aa)). Asp-25 is a catalytic residue. A glycan (N-linked (GlcNAc...) asparagine) is linked at Asn-31. Residues Asp-113 and Glu-115 contribute to the active site.

Belongs to the glycosyl hydrolase 25 family.

The protein resides in the secreted. It carries out the reaction Hydrolysis of (1-&gt;4)-beta-linkages between N-acetylmuramic acid and N-acetyl-D-glucosamine residues in a peptidoglycan and between N-acetyl-D-glucosamine residues in chitodextrins.. This is Probable GH family 25 lysozyme 5 from Dictyostelium discoideum (Social amoeba).